The primary structure comprises 615 residues: ATP-dependent zinc metalloprotease FtsH 2 (615 aa).

The Cytoplasmic portion of the chain corresponds to 1-7; sequence MNEPNRN. The helical transmembrane segment at 8 to 28 threads the bilayer; it reads FFWIFFLILGIFWLQSVWFGS. The Periplasmic segment spans residues 29–99; that stretch reads RTVQQIPYSQ…VTYRREIENT (71 aa). The chain crosses the membrane as a helical span at residues 100 to 120; that stretch reads FFRDLLSWVVPALIFVAVFLY. Topologically, residues 121–615 are cytoplasmic; that stretch reads FSRKFAEKGG…APQRERDLSV (495 aa). Position 195 to 202 (195 to 202) interacts with ATP; sequence GPPGTGKT. H418 is a binding site for Zn(2+). E419 is a catalytic residue. Zn(2+) contacts are provided by H422 and D495.

In the central section; belongs to the AAA ATPase family. It in the C-terminal section; belongs to the peptidase M41 family. Homohexamer. Zn(2+) serves as cofactor.

Its subcellular location is the cell inner membrane. Functionally, acts as a processive, ATP-dependent zinc metallopeptidase for both cytoplasmic and membrane proteins. Plays a role in the quality control of integral membrane proteins. This is ATP-dependent zinc metalloprotease FtsH 2 from Bdellovibrio bacteriovorus (strain ATCC 15356 / DSM 50701 / NCIMB 9529 / HD100).